Consider the following 95-residue polypeptide: IgNAR transmembrane form NE (95 aa).

The 36-residue stretch at 1 to 36 (LTFSTRSLLNLPAVEWKSGAKYTCTASHSPSQSTVK) folds into the Ig-like domain. Over residues 24 to 35 (CTASHSPSQSTV) the composition is skewed to polar residues. Residues 24–79 (CTASHSPSQSTVKRVIRNPKESPKGSSETRKSPLEIMESPEDYGTEEDQLENVNED) are disordered. A compositionally biased stretch (basic and acidic residues) spans 41–56 (NPKESPKGSSETRKSP). The segment covering 61–77 (ESPEDYGTEEDQLENVN) has biased composition (acidic residues). N81 is a glycosylation site (N-linked (GlcNAc...) asparagine).

In terms of tissue distribution, expressed mainly in lymphoid tissues including spleen, epigonal organ and circulating lymphocytes. Also expressed at low levels in the pancreas.

This is IgNAR transmembrane form NE from Ginglymostoma cirratum (Nurse shark).